A 529-amino-acid chain; its full sequence is Nucleolar protein 58 (529 aa).

A Phosphothreonine modification is found at Thr-34. Residue Ser-109 is modified to Phosphoserine. The sufficient for interaction with NOPCHAP1 stretch occupies residues Ala-155–Asp-400. A Glycyl lysine isopeptide (Lys-Gly) (interchain with G-Cter in SUMO2) cross-link involves residue Lys-157. Positions Ile-282–Asp-400 constitute a Nop domain. Phosphoserine occurs at positions 304 and 351. Residues Lys-353, Lys-411, Lys-415, Lys-422, Lys-426, Lys-441, Lys-444, and Lys-465 each participate in a glycyl lysine isopeptide (Lys-Gly) (interchain with G-Cter in SUMO2) cross-link. The tract at residues Thr-409–Asp-529 is disordered. Positions Ala-414 to Thr-427 are enriched in basic and acidic residues. Residue Lys-467 forms a Glycyl lysine isopeptide (Lys-Gly) (interchain with G-Cter in SUMO); alternate linkage. Residue Lys-467 forms a Glycyl lysine isopeptide (Lys-Gly) (interchain with G-Cter in SUMO1); alternate linkage. Lys-467 is covalently cross-linked (Glycyl lysine isopeptide (Lys-Gly) (interchain with G-Cter in SUMO2); alternate). Residues Glu-469–Glu-481 are compositionally biased toward acidic residues. Ser-483 carries the phosphoserine modification. A Glycyl lysine isopeptide (Lys-Gly) (interchain with G-Cter in SUMO2) cross-link involves residue Lys-485. A compositionally biased stretch (basic residues) spans Lys-485–His-495. Lys-497 participates in a covalent cross-link: Glycyl lysine isopeptide (Lys-Gly) (interchain with G-Cter in SUMO); alternate. Residue Lys-497 forms a Glycyl lysine isopeptide (Lys-Gly) (interchain with G-Cter in SUMO2); alternate linkage. A phosphoserine mark is found at Ser-502 and Ser-514. The span at Lys-517–Asp-529 shows a compositional bias: basic residues.

Belongs to the NOP5/NOP56 family. Core component of box C/D small nucleolar ribonucleoprotein (snoRNP) particles; the core proteins SNU13, NOP56, NOP58 and FBL or FBLL1 assemble stepwise onto the snoRNA. Interacts with NOLC1/Nopp140. Interacts with NOPCHAP1, NUFIP1, RUVBL1 and RUVBL2; NOPCHAP1 bridges the association of NOP58 with RUVBL1:RUVBL2 and NUFIP1. Interacts with PIH1D1. Part of the small subunit (SSU) processome, composed of more than 70 proteins and the RNA chaperone small nucleolar RNA (snoRNA) U3. Post-translationally, sumoylation is essential for high-affinity binding to snoRNAs. In terms of tissue distribution, ubiquitous.

The protein localises to the nucleus. The protein resides in the nucleolus. It is found in the nucleoplasm. Functionally, required for the biogenesis of box C/D snoRNAs such as U3, U8 and U14 snoRNAs. Part of the small subunit (SSU) processome, first precursor of the small eukaryotic ribosomal subunit. During the assembly of the SSU processome in the nucleolus, many ribosome biogenesis factors, an RNA chaperone and ribosomal proteins associate with the nascent pre-rRNA and work in concert to generate RNA folding, modifications, rearrangements and cleavage as well as targeted degradation of pre-ribosomal RNA by the RNA exosome. Core component of box C/D small nucleolar ribonucleoprotein (snoRNP) complexes that function in methylation of multiple sites on ribosomal RNAs (rRNAs) and messenger RNAs (mRNAs). In Homo sapiens (Human), this protein is Nucleolar protein 58.